Here is a 388-residue protein sequence, read N- to C-terminus: Homeobox protein Hox-A13 (388 aa).

The homeobox DNA-binding region spans 322 to 381 (GRKKRVPYTKVQLKELEREYATNKFITKDKRRRISATTNLSERQVTIWFQNRRVKEKKVI).

It belongs to the Abd-B homeobox family. As to quaternary structure, binds DNA as a homodimer. Interacts with MEIS1, MEIS2 and MEIS3.

Its subcellular location is the nucleus. Functionally, sequence-specific, AT-rich binding transcription factor which is part of a developmental regulatory system that provides cells with specific positional identities on the anterior-posterior axis. Sequence-specific transcription factor which is part of a developmental regulatory system that provides cells with specific positional identities on the anterior-posterior axis. This chain is Homeobox protein Hox-A13 (HOXA13), found in Homo sapiens (Human).